A 428-amino-acid polypeptide reads, in one-letter code: Enolase (428 aa).

(2R)-2-phosphoglycerate is bound at residue Q163. E205 (proton donor) is an active-site residue. D242, E286, and D313 together coordinate Mg(2+). Positions 338, 367, 368, and 389 each coordinate (2R)-2-phosphoglycerate. The active-site Proton acceptor is the K338.

It belongs to the enolase family. It depends on Mg(2+) as a cofactor.

The protein resides in the cytoplasm. It is found in the secreted. The protein localises to the cell surface. It carries out the reaction (2R)-2-phosphoglycerate = phosphoenolpyruvate + H2O. The protein operates within carbohydrate degradation; glycolysis; pyruvate from D-glyceraldehyde 3-phosphate: step 4/5. Functionally, catalyzes the reversible conversion of 2-phosphoglycerate (2-PG) into phosphoenolpyruvate (PEP). It is essential for the degradation of carbohydrates via glycolysis. The polypeptide is Enolase (Bordetella bronchiseptica (strain ATCC BAA-588 / NCTC 13252 / RB50) (Alcaligenes bronchisepticus)).